The chain runs to 172 residues: Adenine phosphoribosyltransferase (172 aa).

This sequence belongs to the purine/pyrimidine phosphoribosyltransferase family. As to quaternary structure, homodimer.

Its subcellular location is the cytoplasm. The catalysed reaction is AMP + diphosphate = 5-phospho-alpha-D-ribose 1-diphosphate + adenine. The protein operates within purine metabolism; AMP biosynthesis via salvage pathway; AMP from adenine: step 1/1. Functionally, catalyzes a salvage reaction resulting in the formation of AMP, that is energically less costly than de novo synthesis. This chain is Adenine phosphoribosyltransferase, found in Staphylococcus saprophyticus subsp. saprophyticus (strain ATCC 15305 / DSM 20229 / NCIMB 8711 / NCTC 7292 / S-41).